Reading from the N-terminus, the 555-residue chain is 1,3-beta-glucanosyltransferase GAS2 (555 aa).

The first 24 residues, 1–24 (MNKKQNFYAAIIVAIFLCLQLSHG), serve as a signal peptide directing secretion. C89 and C118 are disulfide-bonded. (1,3-beta-D-glucosyl)n is bound by residues Y107, 134–142 (SEPDISINR), N175, E176, D217, and R222. E176 functions as the Proton donor in the catalytic mechanism. Intrachain disulfides connect C231-C367, C247-C278, C390-C442, C392-C489, C399-C466, and C419-C424. Catalysis depends on E275, which acts as the Nucleophile. Y307 is a (1,3-beta-D-glucosyl)n binding site. N-linked (GlcNAc...) asparagine glycosylation occurs at N498. The GPI-anchor amidated aspartate moiety is linked to residue D531. A propeptide spans 532–555 (GTIAFKTSGFVILLISMIAAGILL) (removed in mature form).

The protein belongs to the glycosyl hydrolase 72 family. N-glycosylated.

Its subcellular location is the cell membrane. Splits internally a 1,3-beta-glucan molecule and transfers the newly generated reducing end (the donor) to the non-reducing end of another 1,3-beta-glucan molecule (the acceptor) forming a 1,3-beta linkage, resulting in the elongation of 1,3-beta-glucan chains in the cell wall. Involved in spore wall assembly. The chain is 1,3-beta-glucanosyltransferase GAS2 (GAS2) from Saccharomyces cerevisiae (strain ATCC 204508 / S288c) (Baker's yeast).